Consider the following 246-residue polypeptide: tRNA (guanine-N(7)-)-methyltransferase (246 aa).

The disordered stretch occupies residues 1–23 (MIESSSPTPPALHEGAPADVSHP). Residues Glu-75, Glu-100, Asp-127, and Asp-150 each coordinate S-adenosyl-L-methionine. Asp-150 is an active-site residue. Position 154 (Lys-154) interacts with substrate. Residues 156-161 (KHNKRR) form an interaction with RNA region. Residues Asp-186 and 225–228 (TKFE) each bind substrate.

It belongs to the class I-like SAM-binding methyltransferase superfamily. TrmB family.

The enzyme catalyses guanosine(46) in tRNA + S-adenosyl-L-methionine = N(7)-methylguanosine(46) in tRNA + S-adenosyl-L-homocysteine. It functions in the pathway tRNA modification; N(7)-methylguanine-tRNA biosynthesis. Catalyzes the formation of N(7)-methylguanine at position 46 (m7G46) in tRNA. This chain is tRNA (guanine-N(7)-)-methyltransferase, found in Polaromonas naphthalenivorans (strain CJ2).